The sequence spans 532 residues: Putative sodium-dependent excitatory amino acid transporter glt-3 (532 aa).

The Cytoplasmic segment spans residues 1–5 (MGMKK). The next 3 membrane-spanning stretches (helical) occupy residues 6–26 (DLLL…GFVI), 46–66 (FMQI…ISAL), and 83–103 (IYYM…VSSI). The Extracellular segment spans residues 104 to 181 (HPGDPELIHE…SEVLHKQTLT (78 aa)). Asn164 and Asn169 each carry an N-linked (GlcNAc...) asparagine glycan. A run of 5 helical transmembrane segments spans residues 182-202 (YTNE…GIIL), 222-242 (IIMR…LSLV), 264-284 (VTVI…LYFL), 352-372 (AVAV…MDLV), and 383-402 (IGSG…LTTV).

It belongs to the dicarboxylate/amino acid:cation symporter (DAACS) (TC 2.A.23) family.

Its subcellular location is the membrane. The protein is Putative sodium-dependent excitatory amino acid transporter glt-3 (glt-3) of Caenorhabditis elegans.